A 365-amino-acid chain; its full sequence is P2Y purinoceptor 4 (365 aa).

Over 1–34 (MASTESSLLRSLGLSPGPGSSEVELDCWFDEDFK) the chain is Extracellular. Residues 35 to 61 (FILLPVSYAVVFVLGLGLNAPTLWLFI) traverse the membrane as a helical segment. Over 62–72 (FRLRPWDATAT) the chain is Cytoplasmic. The helical transmembrane segment at 73-95 (YMFHLALSDTLYVLSLPTLIYYY) threads the bilayer. Over 96–112 (AAHNHWPFGTEICKFVR) the chain is Extracellular. A disulfide bond links cysteine 108 and cysteine 185. A helical transmembrane segment spans residues 113–131 (FLFYWNLYCSVLFLTCISV). Topologically, residues 132-154 (HRYLGICHPLRALRWGRPRLAGL) are cytoplasmic. Residues 155–174 (LCLAVWLVVAGCLVPNLFFV) traverse the membrane as a helical segment. Topologically, residues 175 to 196 (TTSNKGTTVLCHDTTRPEEFDH) are extracellular. The helical transmembrane segment at 197-222 (YVHFSSAVMGLLFGVPCLVTLVCYGL) threads the bilayer. The Cytoplasmic segment spans residues 223-246 (MARRLYQPLPGSAQSSSRLRSLRT). A helical transmembrane segment spans residues 247-269 (IAVVLTVFAVCFVPFHITRTIYY). Residues 270–287 (LARLLEADCRVLNIVNVV) lie on the Extracellular side of the membrane. Residues 288-309 (YKVTRPLASANSCLDPVLYLLT) form a helical membrane-spanning segment. Residues 310–365 (GDKYRRQLRQLCGGGKPQPRTAASSLALVSLPEDSSCRWAATPQDSSCSTPRADRL) lie on the Cytoplasmic side of the membrane. Serine 333 and serine 334 each carry phosphoserine.

Belongs to the G-protein coupled receptor 1 family. In terms of processing, phosphorylation of Ser-333 and Ser-334 is a key step in agonist-dependent desensitization and loss of surface P2RY4. This phosphorylation does not involve PKC, nor other calcium activated kinases. As to expression, pancreas.

Its subcellular location is the cell membrane. Receptor for UTP and UDP coupled to G-proteins that activate a phosphatidylinositol-calcium second messenger system. Not activated by ATP or ADP. The polypeptide is P2Y purinoceptor 4 (P2RY4) (Homo sapiens (Human)).